The primary structure comprises 235 residues: Large ribosomal subunit protein uL1 (235 aa).

Belongs to the universal ribosomal protein uL1 family. Part of the 50S ribosomal subunit.

Functionally, binds directly to 23S rRNA. The L1 stalk is quite mobile in the ribosome, and is involved in E site tRNA release. In terms of biological role, protein L1 is also a translational repressor protein, it controls the translation of the L11 operon by binding to its mRNA. The chain is Large ribosomal subunit protein uL1 from Methylobacterium sp. (strain 4-46).